The primary structure comprises 169 residues: Putative cysteine protease YraA (169 aa).

The PfpI endopeptidase domain maps to 3 to 169; that stretch reads KKIAVLVTDQ…FNRESLNLLK (167 aa). The active-site Nucleophile is the Cys103. His104 is a catalytic residue.

The protein belongs to the peptidase C56 family.

Functions in the protection against aldehyde-stress, possibly by degrading damaged proteins. In Bacillus subtilis (strain 168), this protein is Putative cysteine protease YraA (yraA).